We begin with the raw amino-acid sequence, 582 residues long: MQHPGPRLWLVLQVMIGSCTAISSMDLERPGDGKCQPVEIPMCKDIGYNTTRMPNLMGHENQREAAIQLHEFAPLVEYGCHSHLRFFLCSLYAPMCTEQVSTPIPACRVMCEQARLKCSPIMEQFKFRWPDSLDCSKLPNKNDPNYLCMEAPNNGSDEPSRGSGMFPPLFRPQRPHSAQEHPLKDGGPGRAGCDNPGKFHHVEKSESCAPLCTPGVDVYWSRDDKRFAVVWLAIWSVLCFFSSAFTVLTFLIDPSRFRYPERPIIFLSMCYCVYSVGYIIRLFAGAESIACDRDSGQLYVIQEGLESTGCTLVFLVLYYFGMASSLWWVVLTLTWFLAAGKKWGHEAIEANSSYFHLAAWAIPAVKTILILVMRRVAGDELTGVCYVGSMDVNALTGFVLVPLACYLVIGTSFILSGFVALFHIRRVMKTGGENTDKLEKLMVRIGVFSLLYTVPATCVIACYFYERLNMDYWKMLATQHKCKMNNQTKTPDCLMTTSIPAVEVFMVKVSMLLVVGITSGVWVWTSKTLQSWQHVCSRGLKRKSRRKPASVVTSAGIYKKAQHPQKPHLGKYELPAQPSACV.

The signal sequence occupies residues 1–21 (MQHPGPRLWLVLQVMIGSCTA). Residues 22–226 (ISSMDLERPG…DVYWSRDDKR (205 aa)) lie on the Extracellular side of the membrane. One can recognise an FZ domain in the interval 30 to 151 (PGDGKCQPVE…NDPNYLCMEA (122 aa)). 5 disulfide bridges follow: C35–C96, C43–C89, C80–C118, C107–C148, and C111–C135. The N-linked (GlcNAc...) asparagine glycan is linked to N49. Residues 153–189 (NNGSDEPSRGSGMFPPLFRPQRPHSAQEHPLKDGGPG) form a disordered region. N154 carries an N-linked (GlcNAc...) asparagine glycan. The chain crosses the membrane as a helical span at residues 227 to 247 (FAVVWLAIWSVLCFFSSAFTV). The Cytoplasmic segment spans residues 248-263 (LTFLIDPSRFRYPERP). A helical membrane pass occupies residues 264–284 (IIFLSMCYCVYSVGYIIRLFA). Over 285–312 (GAESIACDRDSGQLYVIQEGLESTGCTL) the chain is Extracellular. The chain crosses the membrane as a helical span at residues 313 to 333 (VFLVLYYFGMASSLWWVVLTL). Residues 334-352 (TWFLAAGKKWGHEAIEANS) are Cytoplasmic-facing. The chain crosses the membrane as a helical span at residues 353–373 (SYFHLAAWAIPAVKTILILVM). The Extracellular segment spans residues 374–394 (RRVAGDELTGVCYVGSMDVNA). Residues 395–415 (LTGFVLVPLACYLVIGTSFIL) form a helical membrane-spanning segment. The Cytoplasmic portion of the chain corresponds to 416-444 (SGFVALFHIRRVMKTGGENTDKLEKLMVR). Residues 445 to 465 (IGVFSLLYTVPATCVIACYFY) form a helical membrane-spanning segment. Over 466–503 (ERLNMDYWKMLATQHKCKMNNQTKTPDCLMTTSIPAVE) the chain is Extracellular. The N-linked (GlcNAc...) asparagine glycan is linked to N486. The chain crosses the membrane as a helical span at residues 504–524 (VFMVKVSMLLVVGITSGVWVW). Topologically, residues 525 to 582 (TSKTLQSWQHVCSRGLKRKSRRKPASVVTSAGIYKKAQHPQKPHLGKYELPAQPSACV) are cytoplasmic. The Lys-Thr-X-X-X-Trp motif, mediates interaction with the PDZ domain of Dvl family members motif lies at 527-532 (KTLQSW). The tract at residues 561-582 (AQHPQKPHLGKYELPAQPSACV) is disordered. The PDZ-binding signature appears at 580–582 (ACV).

This sequence belongs to the G-protein coupled receptor Fz/Smo family. As to quaternary structure, interacts with MYOC. Interacts with WNT7B. Ubiquitinated by ZNRF3, leading to its degradation by the proteasome.

It is found in the cell membrane. Receptor for Wnt proteins. Functions in the canonical Wnt/beta-catenin signaling pathway. The canonical Wnt/beta-catenin signaling pathway leads to the activation of disheveled proteins, inhibition of GSK-3 kinase, nuclear accumulation of beta-catenin and activation of Wnt target genes. A second signaling pathway involving PKC and calcium fluxes has been seen for some family members, but it is not yet clear if it represents a distinct pathway or if it can be integrated in the canonical pathway, as PKC seems to be required for Wnt-mediated inactivation of GSK-3 kinase. Both pathways seem to involve interactions with G-proteins. May be involved in transduction and intercellular transmission of polarity information during tissue morphogenesis and/or in differentiated tissues. The chain is Frizzled-10 (Fzd10) from Mus musculus (Mouse).